Here is a 116-residue protein sequence, read N- to C-terminus: Large ribosomal subunit protein bL19 (116 aa).

It belongs to the bacterial ribosomal protein bL19 family.

This protein is located at the 30S-50S ribosomal subunit interface and may play a role in the structure and function of the aminoacyl-tRNA binding site. This chain is Large ribosomal subunit protein bL19 (rplS), found in Geobacillus stearothermophilus (Bacillus stearothermophilus).